Reading from the N-terminus, the 363-residue chain is Pyrimidine monooxygenase RutA (363 aa).

Residues 49–50, N115, E124, 140–141, and S190 contribute to the FMN site; these read IK and RY.

Belongs to the NtaA/SnaA/DszA monooxygenase family. RutA subfamily.

The enzyme catalyses uracil + FMNH2 + NADH + O2 = (Z)-3-ureidoacrylate + FMN + NAD(+) + H2O + H(+). It carries out the reaction thymine + FMNH2 + NADH + O2 = (Z)-2-methylureidoacrylate + FMN + NAD(+) + H2O + H(+). Functionally, catalyzes the pyrimidine ring opening between N-3 and C-4 by an unusual flavin hydroperoxide-catalyzed mechanism, adding oxygen atoms in the process to yield ureidoacrylate peracid, that immediately reacts with FMN forming ureidoacrylate and FMN-N(5)-oxide. The FMN-N(5)-oxide reacts spontaneously with NADH to produce FMN. Requires the flavin reductase RutF to regenerate FMN in vivo. The polypeptide is Pyrimidine monooxygenase RutA (Enterobacter sp. (strain 638)).